A 221-amino-acid polypeptide reads, in one-letter code: Probable septum site-determining protein MinC (221 aa).

The protein belongs to the MinC family. In terms of assembly, interacts with MinD and FtsZ.

Its function is as follows. Cell division inhibitor that blocks the formation of polar Z ring septums. Rapidly oscillates between the poles of the cell to destabilize FtsZ filaments that have formed before they mature into polar Z rings. Prevents FtsZ polymerization. This Aliivibrio salmonicida (strain LFI1238) (Vibrio salmonicida (strain LFI1238)) protein is Probable septum site-determining protein MinC.